Consider the following 137-residue polypeptide: Large ribosomal subunit protein uL16 (137 aa).

This sequence belongs to the universal ribosomal protein uL16 family. Part of the 50S ribosomal subunit.

Its function is as follows. Binds 23S rRNA and is also seen to make contacts with the A and possibly P site tRNAs. The sequence is that of Large ribosomal subunit protein uL16 from Nitrobacter winogradskyi (strain ATCC 25391 / DSM 10237 / CIP 104748 / NCIMB 11846 / Nb-255).